We begin with the raw amino-acid sequence, 318 residues long: NAC domain-containing protein 68 (318 aa).

The region spanning 21-175 is the NAC domain; that stretch reads LPPGFRFHPT…EWVLCRLYNK (155 aa).

As to expression, expressed in stems, leaf blades and callus. Weakly expressed in developing flowers.

The protein localises to the nucleus. Probable transcription factor involved in stress response. The protein is NAC domain-containing protein 68 of Oryza sativa subsp. japonica (Rice).